Reading from the N-terminus, the 859-residue chain is Rod cGMP-specific 3',5'-cyclic phosphodiesterase subunit alpha (859 aa).

N-acetylglycine is present on glycine 2. GAF domains lie at glutamine 73 to methionine 222 and aspartate 254 to valine 431. Residues glutamate 483–tyrosine 816 form the PDEase domain. Histidine 559 (proton donor) is an active-site residue. A divalent metal cation is bound by residues histidine 563, histidine 599, aspartate 600, and aspartate 720. Positions leucine 823–glutamine 859 are disordered. Cysteine 856 bears the Cysteine methyl ester mark. Cysteine 856 carries S-farnesyl cysteine lipidation. A propeptide spans cysteine 857–glutamine 859 (removed in mature form).

This sequence belongs to the cyclic nucleotide phosphodiesterase family. In terms of assembly, oligomer composed of two catalytic chains (alpha and beta), an inhibitory chain (gamma) and the delta chain. Requires a divalent metal cation as cofactor.

Its subcellular location is the cell membrane. The protein localises to the cell projection. It is found in the cilium. It localises to the photoreceptor outer segment. The enzyme catalyses 3',5'-cyclic GMP + H2O = GMP + H(+). Its function is as follows. Rod-specific cGMP phosphodiesterase that catalyzes the hydrolysis of 3',5'-cyclic GMP. This protein participates in processes of transmission and amplification of the visual signal. The chain is Rod cGMP-specific 3',5'-cyclic phosphodiesterase subunit alpha from Mus musculus (Mouse).